Consider the following 1031-residue polypeptide: MTSEYAELHCLSNFSFQRGASSARELFERASRHGYQALAITDECTLAGIVRAWQASISTGLPLIIGSEMHIENGPKAVLLVESQTGYEALCKLITVARRRARKGEYRLLREDFEPSSDGLLAIWLPDIEGDAQACLAHGRWLRERFAERLWLGVELHRGADDEQRLADLLALAQSLGIPAVASGDVHMHARGRRALQDTMTAIRHHTTVAEAGHLLFANGERHLRPLDALAEHYPDWLLAESVRIARRCTFDLKQLKYEYPHELVPKGQTPTSWLRELTERGARKRWPNGLTPATRAQVEKELALITEKKFDSYFLTVHDIVEFARSQHILCQGRGSAANSAVCYALGITELNPEKSNLLFERFISRERNEPPDIDVDFEHDRREEVIQYIFRRYGRGRAALTAVASTYHGSGAMRDVAKVLGLPPDQINALAEAFSRWSDSLPSPERLREYGFDADTPILKRVLALTGELIGFPRHLSQHPGGFVISEHPLETLVPVENAAMADRTIIQWDKDDLDLVGLLKVDILALGMLSALRRTFDLVHLHRGKRWTLADLPGDDRETYEMISRADTIGVFQIESRAQMAMLPRLRPEKFYDLVIEVAIVRPGPIQGDMVHPYLRRRNKEEAITYPPKLKSVFERTLGVPLFQEQVMEVAIIAAGYTPGEADELRRAMAAWKRHGGLEPHRERLRTGMLKNGYEADFADRIFEQIKGFGSYGFPESHAASFALLTYASCWLKCHEPAAFTCALINSWPMGFYSPDQLLQDARRHHIEIRPVDVRYSDWDCSLEPLDHPDSTRNLAIRLGLRMVRGFREDDARRIETARSKRLFSDATDLTLRAGLDARAAEALADSGALRGLIGHRHRARWEVAGVEAQRPLFNDLPSEDTQVTLPLPTVAEDLMADYATLGTTLGPHPLALLRRQLAAKRFRSSQDLLSLENDRTLSVAGLVIGRQRPGTASGVTFVTLEDEFGMVNVVVWRDLAERQRKVLVGSQLLQVFGRLESKSGVRHLIAQRLYDLTPLLTGLDVRSRDFQ.

Belongs to the DNA polymerase type-C family. DnaE2 subfamily.

It is found in the cytoplasm. The enzyme catalyses DNA(n) + a 2'-deoxyribonucleoside 5'-triphosphate = DNA(n+1) + diphosphate. Functionally, DNA polymerase involved in damage-induced mutagenesis and translesion synthesis (TLS). It is not the major replicative DNA polymerase. This Pseudomonas savastanoi pv. phaseolicola (strain 1448A / Race 6) (Pseudomonas syringae pv. phaseolicola (strain 1448A / Race 6)) protein is Error-prone DNA polymerase.